Reading from the N-terminus, the 1178-residue chain is Zinc finger CCHC domain-containing protein 2 (1178 aa).

Disordered regions lie at residues 1–90 (MLRM…GPSA), 207–249 (AARG…RVGG), 557–683 (VTSA…SVNQ), and 936–986 (LSTA…SDST). Residues 43–67 (PPPPPPPPAGPSRGPLPPPPPPRGL) show a composition bias toward pro residues. Residues 75–88 (AAAGAGMPGGGGGP) are compositionally biased toward gly residues. Basic and acidic residues predominate over residues 208–219 (ARGEGSRGGAED). The segment covering 220–229 (ERGEDGDGEQ) has biased composition (acidic residues). A Phosphoserine modification is found at Ser236. A compositionally biased stretch (basic and acidic residues) spans 580–594 (PQTEKEKIKKTDNRL). Polar residues predominate over residues 595-607 (NSRINGIRLSTPQ). A compositionally biased stretch (low complexity) spans 632 to 641 (SSESYSSPSS). Residues 642-661 (PRHDGRESFESEEEKDRDTD) are compositionally biased toward basic and acidic residues. Residues 665–683 (EDSGNPSTTRFTGYGSVNQ) are compositionally biased toward polar residues. Residues 937–948 (STAATSPQPASA) show a composition bias toward low complexity. Positions 959–973 (PAVPTHTPGPAPSPS) are enriched in pro residues. Positions 974 to 986 (PALTHSTAQSDST) are enriched in polar residues. The segment at 1131–1148 (VSCYNCGVSGHYAQDCKQ) adopts a CCHC-type zinc-finger fold.

The protein is Zinc finger CCHC domain-containing protein 2 of Homo sapiens (Human).